The following is a 631-amino-acid chain: Phosphomethylpyrimidine synthase (631 aa).

Substrate is bound by residues asparagine 239, methionine 268, tyrosine 297, histidine 333, 353-355 (SRG), 394-397 (DGLR), and glutamate 433. Histidine 437 serves as a coordination point for Zn(2+). Tyrosine 460 contributes to the substrate binding site. Histidine 501 provides a ligand contact to Zn(2+). Positions 581, 584, and 589 each coordinate [4Fe-4S] cluster.

The protein belongs to the ThiC family. Homodimer. [4Fe-4S] cluster is required as a cofactor.

It catalyses the reaction 5-amino-1-(5-phospho-beta-D-ribosyl)imidazole + S-adenosyl-L-methionine = 4-amino-2-methyl-5-(phosphooxymethyl)pyrimidine + CO + 5'-deoxyadenosine + formate + L-methionine + 3 H(+). The protein operates within cofactor biosynthesis; thiamine diphosphate biosynthesis. In terms of biological role, catalyzes the synthesis of the hydroxymethylpyrimidine phosphate (HMP-P) moiety of thiamine from aminoimidazole ribotide (AIR) in a radical S-adenosyl-L-methionine (SAM)-dependent reaction. This chain is Phosphomethylpyrimidine synthase, found in Salmonella gallinarum (strain 287/91 / NCTC 13346).